A 475-amino-acid polypeptide reads, in one-letter code: Luvungin A synthase CYP716AC1 (475 aa).

The chain crosses the membrane as a helical span at residues 3–23 (FIILSLLLLSLALYSLYYVII). Cys423 is a binding site for heme.

Belongs to the cytochrome P450 family. Requires heme as cofactor. In terms of tissue distribution, expressed in flowers, maturing fruits and in juice vesicles.

Its subcellular location is the membrane. The enzyme catalyses (21S)-21-acetoxyl-apo-melianone + reduced [NADPH--hemoprotein reductase] + O2 = luvungin A + oxidized [NADPH--hemoprotein reductase] + H2O + H(+). It functions in the pathway secondary metabolite biosynthesis; terpenoid biosynthesis. Its function is as follows. Monooxygenase involved in the biosynthesis of limonoids triterpene natural products such as limonin, a compound with insecticidal activity responsible for the bitter taste in citrus. Catalyzes the conversion of (21S)-21-acetoxyl-apo-melianone to luvungin A. The polypeptide is Luvungin A synthase CYP716AC1 (Citrus sinensis (Sweet orange)).